A 257-amino-acid polypeptide reads, in one-letter code: RNA polymerase sigma-G factor (257 aa).

A Polymerase core binding motif is present at residues 66–79 (DLFQVGCIGLIKSI). Residues 228-247 (QMEVADEIGISQAQVSRLEK) constitute a DNA-binding region (H-T-H motif).

This sequence belongs to the sigma-70 factor family.

In terms of biological role, sigma factors are initiation factors that promote the attachment of RNA polymerase to specific initiation sites and are then released. This sigma factor is responsible for the expression of sporulation specific genes. The polypeptide is RNA polymerase sigma-G factor (sigG) (Clostridium acetobutylicum (strain ATCC 824 / DSM 792 / JCM 1419 / IAM 19013 / LMG 5710 / NBRC 13948 / NRRL B-527 / VKM B-1787 / 2291 / W)).